A 70-amino-acid polypeptide reads, in one-letter code: Putative membrane protein insertion efficiency factor (70 aa).

Belongs to the UPF0161 family.

Its subcellular location is the cell membrane. Functionally, could be involved in insertion of integral membrane proteins into the membrane. This chain is Putative membrane protein insertion efficiency factor, found in Rubrobacter xylanophilus (strain DSM 9941 / JCM 11954 / NBRC 16129 / PRD-1).